The following is a 412-amino-acid chain: DnaJ homolog subfamily A member 2 (412 aa).

Residues 8–70 form the J domain; that stretch reads KLYDILGVPP…EKRELYDRYG (63 aa). At Lys39 the chain carries N6-acetyllysine. Phosphoserine occurs at positions 78 and 123. Residues 130 to 214 form a CR-type zinc finger; it reads GKTTKLQLSK…CEGKKVIKEV (85 aa). Lys134 is covalently cross-linked (Glycyl lysine isopeptide (Lys-Gly) (interchain with G-Cter in SUMO2)). Residues Cys143 and Cys146 each contribute to the Zn(2+) site. One copy of the CXXCXGXG motif repeat lies at 143–150; sequence CSACSGQG. Position 152 is an N6-acetyllysine (Lys152). Residues Cys159, Cys162, Cys186, Cys189, Cys202, and Cys205 each coordinate Zn(2+). CXXCXGXG motif repeat units lie at residues 159–166, 186–193, and 202–209; these read CSACRGRG, CSDCNGEG, and CKKCEGKK. Positions 359–412 are disordered; the sequence is PEVPNIIGDTEEVELQEFDSTRGSGGGQRREAYNDSSDEESSSHHGPGVQCAHQ. Tyr391 is modified (phosphotyrosine). Phosphoserine is present on residues Ser394 and Ser395. Cys409 bears the Cysteine methyl ester mark. Cys409 carries S-farnesyl cysteine lipidation. Positions 410–412 are cleaved as a propeptide — removed in mature form; it reads AHQ.

It localises to the membrane. Functionally, co-chaperone of Hsc70. Stimulates ATP hydrolysis and the folding of unfolded proteins mediated by HSPA1A/B (in vitro). The chain is DnaJ homolog subfamily A member 2 (DNAJA2) from Bos taurus (Bovine).